Consider the following 829-residue polypeptide: MKMTRRAFVKANAAASAAAVAGITLPASAANLIASSDQTKITWDKAPCRFCGTGCSVLVGTQNGKVVATQGDPEAPVNKGLNCIKGYFLSKIMYGQDRLTQPLLRMKDGKYHKDGEFTPVSWDVAFDTMAEKWKASLEKKGPTSVGMFGSGQWTVMEGYAAAKMMKAGFRSNNIDPNARHCMASAVVGFMRAFGIDEPMGCYDDFENADAFVLWGSNMAEMHPVLWTRITDRRLSHPHVRVNVLSTYYHRSFELADHGYIFNPQSDLAIANFIANYIIENDAVNWDFVNKHTNFTQADTDIGYGLRDDDPLQKAAKNPNSGKLTSISFEEYKKSVAPYTVEKASEISGVEKEKLIELAKQYADPNTKVMSLWTMGMNQHTRGVWMNNLVYNIHLLTGKIATPGNSPFSLTGQPSACGTAREVGTFAHRLPADMVVANPKHRQIAEKIWKLPEGTIPPKPGFHAVLQDRMLNDGVLNCYWVQCNNNMQAGPNINTERLPGYRNPENFIVVSDPYPTATAQAADLILPTAMWIEKEGAYGNAERRTQAWYQQVGTVGDAKSDLWQVMEFSKRFKMEEVWPEELLAKAPQYRGKTMYDMLFKNGQVDKFPLEEARELNDDSHHFGFYVQKGLFEEYATFGRGHGHDLAPYDVYHTVRGLRWPVVDGKETQWRFKEGSDPYAKAGSGWDFYGNADGKAKIISAPYEAPPEVPDSEFDLWLCTGRVLEHWHTGTMTRRVPELYKAVPDAVCYMHPEDAKARNVRRGEEVVIANKRGEVRVRVETRGRNRPPKGLVFVPFFDARILINKLILDATDPLSKQTDFKKCPVKITKVA.

A signal peptide (tat-type signal) is located at residues 1–30; the sequence is MKMTRRAFVKANAAASAAAVAGITLPASAA. The 57-residue stretch at 41-97 folds into the 4Fe-4S Mo/W bis-MGD-type domain; that stretch reads ITWDKAPCRFCGTGCSVLVGTQNGKVVATQGDPEAPVNKGLNCIKGYFLSKIMYGQD. The [4Fe-4S] cluster site is built by Cys-48, Cys-51, Cys-55, and Cys-83. Mo-bis(molybdopterin guanine dinucleotide) contacts are provided by residues Lys-85, Gln-152, Asn-177, Cys-181, 214-221, 245-249, 264-266, Met-374, Gln-378, Asn-484, 510-511, Lys-533, Asp-560, and 718-727; these read WGSNMAEM, STYYH, QSD, SD, and TGRVLEHWHT. Phe-794 contributes to the substrate binding site. Mo-bis(molybdopterin guanine dinucleotide) is bound by residues Asn-802 and Lys-819.

Belongs to the prokaryotic molybdopterin-containing oxidoreductase family. NasA/NapA/NarB subfamily. As to quaternary structure, component of the periplasmic nitrate reductase NapAB complex composed of NapA and NapB. [4Fe-4S] cluster is required as a cofactor. Requires Mo-bis(molybdopterin guanine dinucleotide) as cofactor. In terms of processing, predicted to be exported by the Tat system. The position of the signal peptide cleavage has not been experimentally proven.

The protein resides in the periplasm. The enzyme catalyses 2 Fe(II)-[cytochrome] + nitrate + 2 H(+) = 2 Fe(III)-[cytochrome] + nitrite + H2O. Functionally, catalytic subunit of the periplasmic nitrate reductase complex NapAB. Receives electrons from NapB and catalyzes the reduction of nitrate to nitrite. The polypeptide is Periplasmic nitrate reductase (Vibrio parahaemolyticus serotype O3:K6 (strain RIMD 2210633)).